The following is a 417-amino-acid chain: Brevican core protein (417 aa).

The first 22 residues, 1-22, serve as a signal peptide directing secretion; it reads MAPLFLPLLIALALAPGPTASA. The Ig-like V-type domain maps to 23-155; that stretch reads DVLEGDSSED…SSDAVEVKVK (133 aa). Intrachain disulfides connect cysteine 57/cysteine 137, cysteine 179/cysteine 250, and cysteine 203/cysteine 224. A glycan (N-linked (GlcNAc...) asparagine) is linked at asparagine 130. 2 Link domains span residues 157–252 and 257–354; these read VVFL…YCYA and GELF…YCFR. N-linked (GlcNAc...) asparagine glycosylation occurs at asparagine 267. Disulfide bonds link cysteine 277/cysteine 352 and cysteine 301/cysteine 322. Residue asparagine 337 is glycosylated (N-linked (GlcNAc...) asparagine).

Belongs to the aggrecan/versican proteoglycan family. As to expression, central nervous system.

It localises to the secreted. The protein localises to the extracellular space. It is found in the extracellular matrix. In terms of biological role, may play a role in the terminally differentiating and the adult nervous system during postnatal development. Could stabilize interactions between hyaluronan (HA) and brain proteoglycans. The protein is Brevican core protein (BCAN) of Felis catus (Cat).